A 354-amino-acid chain; its full sequence is GDSL esterase/lipase At3g09930 (354 aa).

Residues 1–24 (MELPKLLISLFLFSFSSFFLGAES) form the signal peptide. S46 serves as the catalytic Nucleophile. 5 N-linked (GlcNAc...) asparagine glycosylation sites follow: N133, N233, N237, N256, and N300. Catalysis depends on residues D329 and H332.

Belongs to the 'GDSL' lipolytic enzyme family.

Its subcellular location is the secreted. The protein is GDSL esterase/lipase At3g09930 of Arabidopsis thaliana (Mouse-ear cress).